The following is a 236-amino-acid chain: Peroxisomal coenzyme A diphosphatase NUDT7 (236 aa).

The residue at position 20 (K20) is an N6-succinyllysine. The Nudix hydrolase domain maps to 37 to 169; sequence SNKFSVLVPL…QKQITQSGRD (133 aa). Positions 77–98 match the Nudix box motif; sequence KRDPVDTDDTATALREAQEEVG. Residues E92 and E96 each contribute to the Mg(2+) site. Position 178 is an N6-succinyllysine (K178). The Microbody targeting signal motif lies at 234-236; sequence SKL.

It belongs to the Nudix hydrolase family. PCD1 subfamily. In terms of assembly, monomer. Requires Mn(2+) as cofactor. It depends on Mg(2+) as a cofactor. Highly expressed in liver, brown adipose tissue and heart. Expressed at intermediate level in lung and kidney and at low level in brain. In terms of tissue distribution, expressed in liver, brown adipose tissue and heart at 20 times lower levels than isoform 1.

Its subcellular location is the peroxisome. The enzyme catalyses hexanoyl-CoA + H2O = hexanoyl-4'-phosphopantetheine + adenosine 3',5'-bisphosphate + 2 H(+). It carries out the reaction octanoyl-CoA + H2O = S-octanoyl-4'-phosphopantetheine + adenosine 3',5'-bisphosphate + 2 H(+). The catalysed reaction is butanoyl-CoA + H2O = S-butanoyl-4'-phosphopantetheine + adenosine 3',5'-bisphosphate + 2 H(+). It catalyses the reaction decanoyl-CoA + H2O = decanoyl-4'-phosphopantetheine + adenosine 3',5'-bisphosphate + 2 H(+). The enzyme catalyses dodecanoyl-CoA + H2O = S-dodecanoyl-4'-phosphopantetheine + adenosine 3',5'-bisphosphate + 2 H(+). It carries out the reaction tetradecanoyl-CoA + H2O = tetradecanoyl-4'-phosphopantetheine + adenosine 3',5'-bisphosphate + 2 H(+). The catalysed reaction is choloyl-CoA + H2O = S-choloyl-4'-phosphopantetheine + adenosine 3',5'-bisphosphate + 2 H(+). It catalyses the reaction 3alpha,7alpha,12alpha-trihydroxy-5beta-cholestan-26-oyl-CoA + H2O = 3alpha,7alpha,12alpha-trihydroxy-5beta-cholestan-26-oyl-4'-phosphopantetheine + adenosine 3',5'-bisphosphate + 2 H(+). The enzyme catalyses acetyl-CoA + H2O = S-acetyl-4'-phosphopantetheine + adenosine 3',5'-bisphosphate + 2 H(+). It carries out the reaction CoA + H2O = (R)-4'-phosphopantetheine + adenosine 3',5'-bisphosphate + 2 H(+). The catalysed reaction is propanoyl-CoA + H2O = propanoyl-4'-phosphopantetheine + adenosine 3',5'-bisphosphate + 2 H(+). It catalyses the reaction malonyl-CoA + H2O = malonyl-4'-phosphopantetheine + adenosine 3',5'-bisphosphate + 2 H(+). The enzyme catalyses succinyl-CoA + H2O = succinyl-4'-phosphopantetheine + adenosine 3',5'-bisphosphate + 2 H(+). It carries out the reaction a 5'-end CoA-ribonucleoside in mRNA + H2O = a 5'-end phospho-adenosine-phospho-ribonucleoside in mRNA + (R)-4'-phosphopantetheine + 2 H(+). With respect to regulation, inhibited by fluoride. In terms of biological role, fatty acyl-coenzyme A (CoA) diphosphatase that hydrolyzes fatty acyl-CoA to yield acyl-4'-phosphopantetheine and adenosine 3',5'-bisphosphate. Cleaves CoA, CoA esters and oxidized CoA with similar efficiencies. Preferentially hydrolyzes medium-chain acyl-CoAs and bile acid-CoAs. Has no activity toward NDP-sugars, CDP-alcohols, (deoxy)nucleoside 5'-triphosphates, nucleoside 5'-di or monophosphates, diadenosine polyphosphates, NAD, NADH, NADP, NADPH or thymidine-5'-monophospho-p-nitrophenyl ester. May be required to eliminate oxidized CoA from peroxisomes, or regulate CoA and acyl-CoA levels in this organelle in response to metabolic demand. Does not play a role in U8 snoRNA decapping activity. Binds U8 snoRNA. Exhibits decapping activity towards dpCoA-capped RNAs in vitro. This chain is Peroxisomal coenzyme A diphosphatase NUDT7, found in Mus musculus (Mouse).